A 318-amino-acid chain; its full sequence is Aspartate carbamoyltransferase catalytic subunit (318 aa).

Residues R58 and T59 each contribute to the carbamoyl phosphate site. K86 contacts L-aspartate. 3 residues coordinate carbamoyl phosphate: R108, H141, and Q144. Residues R174 and R226 each contribute to the L-aspartate site. 2 residues coordinate carbamoyl phosphate: G270 and P271.

It belongs to the aspartate/ornithine carbamoyltransferase superfamily. ATCase family. Heterododecamer (2C3:3R2) of six catalytic PyrB chains organized as two trimers (C3), and six regulatory PyrI chains organized as three dimers (R2).

The catalysed reaction is carbamoyl phosphate + L-aspartate = N-carbamoyl-L-aspartate + phosphate + H(+). The protein operates within pyrimidine metabolism; UMP biosynthesis via de novo pathway; (S)-dihydroorotate from bicarbonate: step 2/3. Catalyzes the condensation of carbamoyl phosphate and aspartate to form carbamoyl aspartate and inorganic phosphate, the committed step in the de novo pyrimidine nucleotide biosynthesis pathway. The sequence is that of Aspartate carbamoyltransferase catalytic subunit from Lactobacillus helveticus (strain DPC 4571).